Consider the following 417-residue polypeptide: MDKIVIHGGNRLKGEVRISGAKNSALPLLFATLLAPGQHQLENVPALRDISTAGKLLSILGAEVHSQEGVFSVDATRIRSVEAPYDLVRTMRASVLVLGPLLARLGHARVSLPGGCAIGARPINLHLKGLEAMGAEIDLDHGYVEARAKRLHGANIYLDIPTVGGTENLLMAACLAQGTTVIENAACEPEIVDLATALTCMGARIEGAGTDRIVVEGVDELQPLHYAVMPDRIEAGTFMVAAAMTRGDVRLLGARQADLEALISKLQEAGVTISAEDHALRVRGPRRIAPVDIKTQPHPGFPTDMQAQFMALMSIADGTSVVTESVFENRFMHVCELQRLGADIAIEGKTAKVRGVKELLGAPVMATDLRASASLVLAGLAAENTTEVSRIYHLDRGYERLEEKFRNLGAHIERIKG.

Position 22 to 23 (22 to 23) interacts with phosphoenolpyruvate; it reads KN. Arginine 92 contributes to the UDP-N-acetyl-alpha-D-glucosamine binding site. Cysteine 116 functions as the Proton donor in the catalytic mechanism. At cysteine 116 the chain carries 2-(S-cysteinyl)pyruvic acid O-phosphothioketal. UDP-N-acetyl-alpha-D-glucosamine-binding residues include aspartate 304 and valine 326.

It belongs to the EPSP synthase family. MurA subfamily.

The protein localises to the cytoplasm. The catalysed reaction is phosphoenolpyruvate + UDP-N-acetyl-alpha-D-glucosamine = UDP-N-acetyl-3-O-(1-carboxyvinyl)-alpha-D-glucosamine + phosphate. The protein operates within cell wall biogenesis; peptidoglycan biosynthesis. Its function is as follows. Cell wall formation. Adds enolpyruvyl to UDP-N-acetylglucosamine. The polypeptide is UDP-N-acetylglucosamine 1-carboxyvinyltransferase (Syntrophotalea carbinolica (strain DSM 2380 / NBRC 103641 / GraBd1) (Pelobacter carbinolicus)).